The sequence spans 274 residues: RNA polymerase sigma factor SigI4 (274 aa).

Residues 87–100 carry the Polymerase core binding motif; that stretch reads EEYSVGLMAFNEAI. The segment at residues 226-245 is a DNA-binding region (H-T-H motif); it reads LSELMGLVNVHRKTVERNRK.

It belongs to the sigma-70 factor family. SigI subfamily. As to quaternary structure, interacts with RsgI4.

The protein localises to the cytoplasm. With respect to regulation, negatively regulated by the anti-sigma-I factor RsgI4. Binding of the polysaccharide substrate to RsgI4 may lead to the release and activation of SigI4. In terms of biological role, sigma factors are initiation factors that promote the attachment of RNA polymerase to specific initiation sites and are then released. This sigma factor is involved in regulation of cellulosomal genes via an external polysaccharide-sensing mechanism. The polypeptide is RNA polymerase sigma factor SigI4 (Acetivibrio thermocellus (strain ATCC 27405 / DSM 1237 / JCM 9322 / NBRC 103400 / NCIMB 10682 / NRRL B-4536 / VPI 7372) (Clostridium thermocellum)).